We begin with the raw amino-acid sequence, 416 residues long: Histidinol dehydrogenase (416 aa).

NAD(+) is bound by residues Tyr117, Gln178, and Asn201. Substrate contacts are provided by Thr224, Gln246, and His249. The Zn(2+) site is built by Gln246 and His249. Residues Glu314 and His315 each act as proton acceptor in the active site. Residues His315, Asp348, Glu402, and His407 each contribute to the substrate site. Asp348 is a Zn(2+) binding site. His407 serves as a coordination point for Zn(2+).

Belongs to the histidinol dehydrogenase family. Zn(2+) serves as cofactor.

The catalysed reaction is L-histidinol + 2 NAD(+) + H2O = L-histidine + 2 NADH + 3 H(+). It functions in the pathway amino-acid biosynthesis; L-histidine biosynthesis; L-histidine from 5-phospho-alpha-D-ribose 1-diphosphate: step 9/9. Functionally, catalyzes the sequential NAD-dependent oxidations of L-histidinol to L-histidinaldehyde and then to L-histidine. This chain is Histidinol dehydrogenase, found in Staphylococcus aureus (strain bovine RF122 / ET3-1).